The sequence spans 290 residues: UPF0761 membrane protein YihY (290 aa).

The next 6 helical transmembrane spans lie at 44–64 (LLSL…FPMF), 104–124 (VGAC…DSAL), 140–160 (FAVY…SLAI), 183–203 (IFPL…VPTI), 210–230 (AIVG…GFAL), and 244–264 (VLAV…IVLL).

It belongs to the UPF0761 family.

Its subcellular location is the cell inner membrane. The polypeptide is UPF0761 membrane protein YihY (Escherichia coli O139:H28 (strain E24377A / ETEC)).